The primary structure comprises 442 residues: tRNA modification GTPase MnmE (442 aa).

Residues Arg23, Glu82, and Lys121 each contribute to the (6S)-5-formyl-5,6,7,8-tetrahydrofolate site. Residues 217–363 (PFKIAIIGET…LVDLLTKYIN (147 aa)) enclose the TrmE-type G domain. Asn227 lines the K(+) pocket. GTP is bound by residues 227 to 232 (NVGKSS), 246 to 252 (SNIKGST), and 271 to 274 (DTAG). Ser231 is a Mg(2+) binding site. Residues Ser246, Ile248, and Ser251 each contribute to the K(+) site. Thr252 contributes to the Mg(2+) binding site. Lys442 contacts (6S)-5-formyl-5,6,7,8-tetrahydrofolate.

This sequence belongs to the TRAFAC class TrmE-Era-EngA-EngB-Septin-like GTPase superfamily. TrmE GTPase family. Homodimer. Heterotetramer of two MnmE and two MnmG subunits. The cofactor is K(+).

It is found in the cytoplasm. Its function is as follows. Exhibits a very high intrinsic GTPase hydrolysis rate. Involved in the addition of a carboxymethylaminomethyl (cmnm) group at the wobble position (U34) of certain tRNAs, forming tRNA-cmnm(5)s(2)U34. In Mycoplasma genitalium (strain ATCC 33530 / DSM 19775 / NCTC 10195 / G37) (Mycoplasmoides genitalium), this protein is tRNA modification GTPase MnmE.